A 130-amino-acid chain; its full sequence is MANQQYYGTGRRKTSAARVFMTPGNGNITVNGRPLDEYFGRETGRMIVRQALEQVDAGDKFDIKATVSGGGSSGQAGAVRHGIARALANYDAELKAPLRRAGFITRDARMVERKKIGLHKARRATQFSKR.

It belongs to the universal ribosomal protein uS9 family.

The sequence is that of Small ribosomal subunit protein uS9 from Halorhodospira halophila (strain DSM 244 / SL1) (Ectothiorhodospira halophila (strain DSM 244 / SL1)).